We begin with the raw amino-acid sequence, 342 residues long: Alternative oxidase, mitochondrial (342 aa).

Residues 1–20 constitute a mitochondrion transit peptide; the sequence is MIKTYQYRSILNSRNVGIRF. Residues 135–155 traverse the membrane as a helical segment; it reads LTRCIFLESVAGVPGMVAAFI. 3 residues coordinate Fe cation: glutamate 142, glutamate 181, and histidine 184. Residues 200 to 220 traverse the membrane as a helical segment; it reads FIIYMGQGVFANLFFLVYLIK. Fe cation contacts are provided by glutamate 232, glutamate 287, and histidine 290. 2 stretches are compositionally biased toward basic and acidic residues: residues 308–321 and 330–342; these read PFAL…KEQQ and PHPE…QMRL. Residues 308-342 form a disordered region; sequence PFALKVEDVPKEQQPDEYSLKTPHPEGWNREQMRL.

Belongs to the alternative oxidase family. In terms of assembly, homodimer; disulfide-linked. Fe cation is required as a cofactor.

It localises to the mitochondrion inner membrane. In terms of biological role, catalyzes cyanide-resistant oxygen consumption. May increase respiration when the cytochrome respiratory pathway is restricted, or in response to low temperatures. This is Alternative oxidase, mitochondrial (AOX1) from Wickerhamomyces anomalus (Yeast).